The chain runs to 673 residues: ATP-binding cassette sub-family G member 8 (673 aa).

The span at 1–11 (MAGKAAEERGL) shows a compositional bias: basic and acidic residues. Residues 1 to 25 (MAGKAAEERGLPKGATPQDTSGLQD) are disordered. The Cytoplasmic segment spans residues 1–416 (MAGKAAEERG…ISNDFRDLPT (416 aa)). Residues 47 to 313 (LEVRDLNYQV…FTAIGYPCPR (267 aa)) enclose the ABC transporter domain. The ABC transmembrane type-2 domain occupies 411–665 (FRDLPTLLIH…VLYYVSLRFI (255 aa)). A helical membrane pass occupies residues 417–437 (LLIHGAEACLMSMTIGFLYFG). At 438–447 (HGSIQLSFMD) the chain is on the extracellular side. Residues 448–468 (TAALLFMIGALIPFNVILDVI) traverse the membrane as a helical segment. The Cytoplasmic segment spans residues 469–497 (SKCYSERAMLYYELEDGLYTTGPYFFAKI). A helical membrane pass occupies residues 498 to 518 (LGELPEHCAYIIIYGMPTYWL). Residues 519-527 (ANLRPGLQP) lie on the Extracellular side of the membrane. The chain crosses the membrane as a helical span at residues 528-548 (FLLHFLLVWLVVFCCRIMALA). Residues 549–555 (AAALLPT) are Cytoplasmic-facing. The helical transmembrane segment at 556 to 576 (FHMASFFSNALYNSFYLAGGF) threads the bilayer. Topologically, residues 577–639 (MINLSSLWTV…LSVMELDSYP (63 aa)) are extracellular. Residue Asn619 is glycosylated (N-linked (GlcNAc...) asparagine). The helical transmembrane segment at 640–660 (LYAIYLIVIGLSGGFMVLYYV) threads the bilayer. Residues 661–673 (SLRFIKQKPSQDW) are Cytoplasmic-facing.

This sequence belongs to the ABC transporter superfamily. ABCG family. Eye pigment precursor importer (TC 3.A.1.204) subfamily. As to quaternary structure, heterodimer with ABCG8. The cofactor is Mg(2+). N-glycosylated. In terms of tissue distribution, predominantly expressed in the liver. Low expression levels in the small intestine and colon. Very low levels in other tissues, including brain, heart and spleen.

The protein localises to the cell membrane. Its subcellular location is the apical cell membrane. It catalyses the reaction cholesterol(in) + ATP + H2O = cholesterol(out) + ADP + phosphate + H(+). It carries out the reaction sitosterol(in) + ATP + H2O = sitosterol(out) + ADP + phosphate + H(+). The ATPase activity of the heterodimer is stimulated by cholate. Taurocholate, glycocholate, taurochenodeoxycholate, glycochenodeoxycholate and taurodeoxycholate also stimulate ATPase activity, but to a lower degree. Glycodeoxycholate has no significant effect on ATPase activity. ATPase activity is inhibited by vanadate and by berillium fluoride. In terms of biological role, ABCG5 and ABCG8 form an obligate heterodimer that mediates Mg(2+)- and ATP-dependent sterol transport across the cell membrane. Plays an essential role in the selective transport of the dietary cholesterol in and out of the enterocytes and in the selective sterol excretion by the liver into bile. Required for normal sterol homeostasis. The heterodimer with ABCG5 has ATPase activity. This is ATP-binding cassette sub-family G member 8 from Homo sapiens (Human).